A 144-amino-acid chain; its full sequence is 3-hydroxyacyl-[acyl-carrier-protein] dehydratase FabZ (144 aa).

The active site involves histidine 51.

This sequence belongs to the thioester dehydratase family. FabZ subfamily.

It is found in the cytoplasm. The catalysed reaction is a (3R)-hydroxyacyl-[ACP] = a (2E)-enoyl-[ACP] + H2O. In terms of biological role, involved in unsaturated fatty acids biosynthesis. Catalyzes the dehydration of short chain beta-hydroxyacyl-ACPs and long chain saturated and unsaturated beta-hydroxyacyl-ACPs. The polypeptide is 3-hydroxyacyl-[acyl-carrier-protein] dehydratase FabZ (Lactococcus lactis subsp. cremoris (strain MG1363)).